The sequence spans 321 residues: NADPH-dependent codeinone reductase 1-2 (321 aa).

The NADPH site is built by T27 and D51. Residues Y56 and H119 each act as proton donor in the active site. H119 provides a ligand contact to substrate. Residues S165, Q187, S214, L216, S264, and R269 each contribute to the NADPH site. Positions 299–321 are disordered; sequence SADFLLSPTGPFKTEEEFWDEKD.

The protein belongs to the aldo/keto reductase family. In terms of tissue distribution, latex secreting cells (laticifer cells). Expressed constitutively in all organs with highest levels in capsules. Restricted to the parietal region of sieve elements adjacent or proximal to laticifers in roots, stems, leaves and carpels.

It localises to the cytoplasm. Its subcellular location is the cytosol. The enzyme catalyses codeine + NADP(+) = codeinone + NADPH + H(+). It carries out the reaction neopine + NADP(+) = neopinone + NADPH + H(+). It catalyses the reaction morphine + NADP(+) = morphinone + NADPH + H(+). The catalysed reaction is neomorphine + NADP(+) = neomorphinone + NADPH + H(+). The protein operates within alkaloid biosynthesis; morphine biosynthesis. NADPH-dependent codeinone reductase involved in biosynthesis of morphinan-type benzylisoquinoline and opiate alkaloids natural products. Reduces codeinone to codeine in the penultimate step in morphine biosynthesis. Can use morphinone, hydrocodone and hydromorphone as substrate during reductive reaction with NADPH as cofactor, and morphine and dihydrocodeine as substrate during oxidative reaction with NADP as cofactor. Converts morphinone to morphine, and neomorphinone to neomorphine. Reduces irreversibly neopinone, a spontaneous isomer of codeinone, to neopine; in planta, neopine levels are limited to low levels. This is NADPH-dependent codeinone reductase 1-2 from Papaver somniferum (Opium poppy).